Here is a 711-residue protein sequence, read N- to C-terminus: Long-chain-fatty-acid--CoA ligase 4 (711 aa).

The helical; Signal-anchor for type III membrane protein transmembrane segment at 8 to 28 threads the bilayer; that stretch reads LTIILLPVHLLITIYSALIFI. Residues 29–711 are Cytoplasmic-facing; that stretch reads PWYFLTNAKK…KDIERMYGGK (683 aa). Serine 447 carries the post-translational modification Phosphoserine.

The protein belongs to the ATP-dependent AMP-binding enzyme family. Mg(2+) serves as cofactor.

The protein resides in the mitochondrion outer membrane. Its subcellular location is the peroxisome membrane. It is found in the microsome membrane. It localises to the endoplasmic reticulum membrane. The protein localises to the cell membrane. The catalysed reaction is a long-chain fatty acid + ATP + CoA = a long-chain fatty acyl-CoA + AMP + diphosphate. It catalyses the reaction (5Z,8Z,11Z,14Z)-eicosatetraenoate + ATP + CoA = (5Z,8Z,11Z,14Z)-eicosatetraenoyl-CoA + AMP + diphosphate. It carries out the reaction hexadecanoate + ATP + CoA = hexadecanoyl-CoA + AMP + diphosphate. The enzyme catalyses (E)-hexadec-2-enoate + ATP + CoA = (2E)-hexadecenoyl-CoA + AMP + diphosphate. The catalysed reaction is 15-hydroxy-(5Z,8Z,11Z,13E)-eicosatetraenoate + ATP + CoA = 15-hydroxy-(5Z,8Z,11Z,13E)-eicosatetraenoyl-CoA + AMP + diphosphate. It catalyses the reaction 12-hydroxy-(5Z,8Z,10E,14Z)-eicosatetraenoate + ATP + CoA = 12-hydroxy-(5Z,8Z,10E,14Z)-eicosatetraenoyl-CoA + AMP + diphosphate. It carries out the reaction 5-hydroxy-(6E,8Z,11Z,14Z)-eicosatetraenoate + ATP + CoA = 5-hydroxy-(6E,8Z,11Z,14Z)-eicosatetraenoyl-CoA + AMP + diphosphate. The enzyme catalyses 5,6-epoxy-(8Z,11Z,14Z)-eicosatrienoate + ATP + CoA = 5,6-epoxy-(8Z,11Z,14Z)-eicosatrienoyl-CoA + AMP + diphosphate. The catalysed reaction is 14,15-epoxy-(5Z,8Z,11Z)-eicosatrienoate + ATP + CoA = 14,15-epoxy-(5Z,8Z,11Z)-eicosatrienoyl-CoA + AMP + diphosphate. It catalyses the reaction 11,12-epoxy-(5Z,8Z,14Z)-eicosatrienoate + ATP + CoA = 11,12-epoxy-(5Z,8Z,14Z)-eicosatrienoyl-CoA + AMP + diphosphate. It carries out the reaction 8,9-epoxy-(5Z,11Z,14Z)-eicosatrienoate + ATP + CoA = 8,9-epoxy-(5Z,11Z,14Z)-eicosatrienoyl-CoA + AMP + diphosphate. With respect to regulation, both triacsin C and rosiglitazone inhibit arachidonoyl-CoA ligase activity. Catalyzes the conversion of long-chain fatty acids to their active form acyl-CoA for both synthesis of cellular lipids, and degradation via beta-oxidation. Preferentially activates arachidonate and eicosapentaenoate as substrates. Preferentially activates 8,9-EET &gt; 14,15-EET &gt; 5,6-EET &gt; 11,12-EET. Modulates glucose-stimulated insulin secretion by regulating the levels of unesterified EETs. Modulates prostaglandin E2 secretion. In Homo sapiens (Human), this protein is Long-chain-fatty-acid--CoA ligase 4 (ACSL4).